The following is a 326-amino-acid chain: Neuferricin homolog (326 aa).

An N-terminal signal peptide occupies residues 1–34 (MEKNRRKKDDAGVMTKTLAGVAALTFLVSFICSS). In terms of domain architecture, Cytochrome b5 heme-binding spans 98–197 (KHVFTPEQLH…KEYPLVGVVA (100 aa)).

This sequence belongs to the cytochrome b5 family. MAPR subfamily.

The protein localises to the secreted. Heme-binding protein. This Caenorhabditis briggsae protein is Neuferricin homolog.